The sequence spans 375 residues: Alanine racemase (375 aa).

Lys35 (proton acceptor; specific for D-alanine) is an active-site residue. At Lys35 the chain carries N6-(pyridoxal phosphate)lysine. Substrate is bound at residue Arg133. Tyr261 acts as the Proton acceptor; specific for L-alanine in catalysis. Met309 lines the substrate pocket.

It belongs to the alanine racemase family. The cofactor is pyridoxal 5'-phosphate.

It carries out the reaction L-alanine = D-alanine. Its pathway is amino-acid biosynthesis; D-alanine biosynthesis; D-alanine from L-alanine: step 1/1. Functionally, catalyzes the interconversion of L-alanine and D-alanine. May also act on other amino acids. The chain is Alanine racemase (alr) from Syntrophobacter fumaroxidans (strain DSM 10017 / MPOB).